The following is a 442-amino-acid chain: UPF0597 protein HRM2_02820 (442 aa).

The protein belongs to the UPF0597 family.

The polypeptide is UPF0597 protein HRM2_02820 (Desulforapulum autotrophicum (strain ATCC 43914 / DSM 3382 / VKM B-1955 / HRM2) (Desulfobacterium autotrophicum)).